The following is a 732-amino-acid chain: Small conductance calcium-activated potassium channel protein 3 (732 aa).

Residues 1 to 11 (MDTSGHFHDSG) show a composition bias toward basic and acidic residues. Disordered stretches follow at residues 1–82 (MDTS…QQAP) and 119–161 (AILH…QASP). A compositionally biased stretch (pro residues) spans 35–61 (QPPPPPAPPAVPQQPPGPLLQPQPPQP). Low complexity predominate over residues 62 to 82 (QQQQSQQQQQQQSQQQQQQAP). The span at 119–133 (AILHPSSRQGSQLNL) shows a compositional bias: polar residues. Low complexity predominate over residues 139-148 (GHSPSSTATS). The residue at position 168 (S168) is a Phosphoserine. Positions 241–257 (THNHQHAGTTAGSTTFP) are enriched in polar residues. Residues 241–260 (THNHQHAGTTAGSTTFPKAN) are disordered. Residues 289-309 (LIFGMFGIVVMVIETELSWGL) traverse the membrane as a helical segment. The helical transmembrane segment at 316-336 (FSLALKCLISLSTVILLGLII) threads the bilayer. The helical transmembrane segment at 367–387 (ISLEMLVCAIHPIPGEYKFFW) threads the bilayer. The chain crosses the membrane as a helical span at residues 406–426 (IILSIPMFLRLYLIARVMLLH). A helical membrane pass occupies residues 455-475 (LMTICPGTVLLVFSISLWIIA). The segment at residues 495–515 (FLGAMWLISITFLSIGYGDMV) is an intramembrane region (pore-forming). A helical membrane pass occupies residues 524–544 (VCLLTGIMGAGCTALVVAVVA). A calmodulin-binding region spans residues 562–638 (DTQLTKRIKN…LVDLSKMQNV (77 aa)). The stretch at 643 to 670 (ITELNDRSEDLEKQIGSLESKLEHLTAS) forms a coiled coil. Residues 704-732 (GTSHAPPSDSPIGISSTSFPTPYTSSSSC) are disordered. The segment covering 718 to 732 (SSTSFPTPYTSSSSC) has biased composition (low complexity).

This sequence belongs to the potassium channel KCNN family. KCa2.3/KCNN3 subfamily. Homodimer. Heteromultimer with KCNN2 or KCNN1; this modulates plasma membrane expression and consequently the small conductance calcium-activated potassium channel activity. The complex is composed of 4 channel subunits each of which binds to a calmodulin subunit which regulates the channel activity through calcium-binding. Interacts with CALM1. As to expression, expressed at low levels in atrial and ventricular myocytes (at protein level).

It localises to the cell membrane. Its subcellular location is the cytoplasm. The protein resides in the myofibril. The protein localises to the sarcomere. It is found in the z line. The catalysed reaction is K(+)(in) = K(+)(out). With respect to regulation, inhibited by bee venom neurotoxin apamin. In terms of biological role, small conductance calcium-activated potassium channel that mediates the voltage-independent transmembrane transfer of potassium across the cell membrane through a constitutive interaction with calmodulin which binds the intracellular calcium allowing its opening. The current is characterized by a voltage-independent activation, an intracellular calcium concentration increase-dependent activation and a single-channel conductance of 10 picosiemens. Also presents an inwardly rectifying current, thus reducing its already small outward conductance of potassium ions, which is particularly the case when the membrane potential displays positive values, above + 20 mV. Activation is followed by membrane hyperpolarization. Thought to regulate neuronal excitability by contributing to the slow component of synaptic afterhyperpolarization. This chain is Small conductance calcium-activated potassium channel protein 3, found in Mus musculus (Mouse).